We begin with the raw amino-acid sequence, 317 residues long: Ribonuclease Z (317 aa).

The Zn(2+) site is built by H61, H63, D65, H66, H153, D221, and H280. The Proton acceptor role is filled by D65.

It belongs to the RNase Z family. In terms of assembly, homodimer. Zn(2+) is required as a cofactor.

It carries out the reaction Endonucleolytic cleavage of RNA, removing extra 3' nucleotides from tRNA precursor, generating 3' termini of tRNAs. A 3'-hydroxy group is left at the tRNA terminus and a 5'-phosphoryl group is left at the trailer molecule.. Functionally, zinc phosphodiesterase, which displays some tRNA 3'-processing endonuclease activity. Probably involved in tRNA maturation, by removing a 3'-trailer from precursor tRNA. In Alkaliphilus oremlandii (strain OhILAs) (Clostridium oremlandii (strain OhILAs)), this protein is Ribonuclease Z.